We begin with the raw amino-acid sequence, 76 residues long: Large ribosomal subunit protein bL31 (76 aa).

This sequence belongs to the bacterial ribosomal protein bL31 family. Type A subfamily. In terms of assembly, part of the 50S ribosomal subunit.

Its function is as follows. Binds the 23S rRNA. The polypeptide is Large ribosomal subunit protein bL31 (Picosynechococcus sp. (strain ATCC 27264 / PCC 7002 / PR-6) (Agmenellum quadruplicatum)).